A 204-amino-acid polypeptide reads, in one-letter code: Carbon disulfide hydrolase (204 aa).

Residues C35, H88, and C91 each coordinate Zn(2+).

It belongs to the beta-class carbonic anhydrase family. In terms of assembly, forms a hexadecameric catenane homooligomer, through interactions of two interlocked octameric rings. It depends on Zn(2+) as a cofactor.

It catalyses the reaction carbon disulfide + 2 H2O = 2 hydrogen sulfide + CO2 + 2 H(+). It participates in sulfur metabolism; hydrogen sulfide biosynthesis. Its function is as follows. Catalyzes the conversion of carbon disulfide into hydrogen sulfide and carbon dioxide, with carbonyl sulfide as an intermediate. Likely plays a key role in sulfur metabolism in S.solfataricus. Does not show carbonic anhydrase activity (hydration of CO(2) to carbonate). This chain is Carbon disulfide hydrolase, found in Saccharolobus solfataricus (strain ATCC 35092 / DSM 1617 / JCM 11322 / P2) (Sulfolobus solfataricus).